Reading from the N-terminus, the 704-residue chain is Glycine--tRNA ligase beta subunit (704 aa).

Belongs to the class-II aminoacyl-tRNA synthetase family. Tetramer of two alpha and two beta subunits.

It localises to the cytoplasm. The enzyme catalyses tRNA(Gly) + glycine + ATP = glycyl-tRNA(Gly) + AMP + diphosphate. The sequence is that of Glycine--tRNA ligase beta subunit from Delftia acidovorans (strain DSM 14801 / SPH-1).